A 121-amino-acid polypeptide reads, in one-letter code: Basic phospholipase A2 BbTX-III (121 aa).

Ca(2+) contacts are provided by Tyr-27, Gly-29, and Gly-31. Cystine bridges form between Cys-28-Cys-44, Cys-43-Cys-95, Cys-49-Cys-121, Cys-50-Cys-88, Cys-58-Cys-82, and Cys-76-Cys-86. His-47 is a catalytic residue. Asp-48 provides a ligand contact to Ca(2+). The active site involves Asp-89.

Belongs to the phospholipase A2 family. Group II subfamily. D49 sub-subfamily. As to quaternary structure, homodimer; non-covalently linked. Ca(2+) is required as a cofactor. Expressed by the venom gland.

It is found in the secreted. It catalyses the reaction a 1,2-diacyl-sn-glycero-3-phosphocholine + H2O = a 1-acyl-sn-glycero-3-phosphocholine + a fatty acid + H(+). In terms of biological role, snake venom phospholipase A2 (PLA2) that exhibits myotoxin and anticoagulant activity. Displays edema-inducing activities in mouse paw. Also displays cytotoxic activity against some cell lines and myotubes, and antimicrobial activities against E.coli, C.albicans and Leishmania. PLA2 catalyzes the calcium-dependent hydrolysis of the 2-acyl groups in 3-sn-phosphoglycerides. This is Basic phospholipase A2 BbTX-III from Bothrops brazili (Brazil's lancehead).